The sequence spans 553 residues: MGPRSSTRIPIPLMLTIRIALALSCVHLASSLDGRPLAAAGIVVTGDKAVNIYTSSQTGSIIVKLHPNMPKDKEACAKAPLEAYNRTLTTLLTPLGDSIRRIQESVTTSGGRRQKRFIGAIIGSVALGVATAAQITAASALIQANQNAANILRLKESITATIEAVHEVTDGLSQLAVAVGKMQQFVNDQFNNTAQELDCIKITQQVGVELNLYLTELTTVFGPQITSPALTQLTIQALYNLAGGNMDYLLTKLGVGNNQLSSLIGSGLITGNPILYDSQTQLLGIQVTLPSVGNLNNMRATYLETLSVSTTKGFASALVPKVVTQVGSVIEELDTSYCIETDLDLYCTRIVTFPMSPGIYSCLNGNTSACMYSKTEGALTTPYMTLKGSVIANCKMTTCRCADPPGIISQNYGEAVSLIDRHSCNVLSLDGITLRLSGEFDATYQKNISILDSQVIVTGNLDISTELGNVNNSISNALDKLEESNSKLDKVNVKLTSTSALITYIALTAISLVCGILSLVLACYLMYKQKAQQKTLLWLGNNTLGQMRATTKM.

The N-terminal stretch at 1–31 is a signal peptide; that stretch reads MGPRSSTRIPIPLMLTIRIALALSCVHLASS. Topologically, residues 32–500 are extracellular; it reads LDGRPLAAAG…VNVKLTSTSA (469 aa). 5 disulfides stabilise this stretch: C76-C199, C338-C347, C362-C370, C394-C399, and C401-C424. The N-linked (GlcNAc...) asparagine; by host glycan is linked to N85. The tract at residues 117–141 is fusion peptide; that stretch reads FIGAIIGSVALGVATAAQITAASAL. Positions 142-170 form a coiled coil; that stretch reads IQANQNAANILRLKESITATIEAVHEVTD. Residue N191 is glycosylated (N-linked (GlcNAc...) asparagine; by host). N-linked (GlcNAc...) asparagine; by host glycosylation occurs at N366. N-linked (GlcNAc...) asparagine; by host glycosylation is found at N447 and N471. The stretch at 466-491 forms a coiled coil; sequence ELGNVNNSISNALDKLEESNSKLDKV. A helical membrane pass occupies residues 501 to 521; it reads LITYIALTAISLVCGILSLVL. Over 522 to 553 the chain is Cytoplasmic; the sequence is ACYLMYKQKAQQKTLLWLGNNTLGQMRATTKM. C523 carries the S-palmitoyl cysteine; by host lipid modification.

It belongs to the paramyxoviruses fusion glycoprotein family. In terms of assembly, homotrimer of disulfide-linked F1-F2. The inactive precursor F0 is glycosylated and proteolytically cleaved into F1 and F2 to be functionally active. The cleavage is mediated by cellular proteases during the transport and maturation of the polypeptide.

Its subcellular location is the virion membrane. It localises to the host cell membrane. Its function is as follows. Class I viral fusion protein. Under the current model, the protein has at least 3 conformational states: pre-fusion native state, pre-hairpin intermediate state, and post-fusion hairpin state. During viral and plasma cell membrane fusion, the heptad repeat (HR) regions assume a trimer-of-hairpins structure, positioning the fusion peptide in close proximity to the C-terminal region of the ectodomain. The formation of this structure appears to drive apposition and subsequent fusion of viral and plasma cell membranes. Directs fusion of viral and cellular membranes leading to delivery of the nucleocapsid into the cytoplasm. This fusion is pH independent and occurs directly at the outer cell membrane. The trimer of F1-F2 (F protein) probably interacts with HN at the virion surface. Upon HN binding to its cellular receptor, the hydrophobic fusion peptide is unmasked and interacts with the cellular membrane, inducing the fusion between cell and virion membranes. Later in infection, F proteins expressed at the plasma membrane of infected cells could mediate fusion with adjacent cells to form syncytia, a cytopathic effect that could lead to tissue necrosis. The protein is Fusion glycoprotein F0 (F) of Gallus gallus (Chicken).